Reading from the N-terminus, the 1955-residue chain is 227 kDa spindle- and centromere-associated protein (1955 aa).

Coiled-coil stretches lie at residues 82 to 129 (KKRI…NDDV), 152 to 317 (EWAS…ELES), 385 to 1747 (VRNI…LIAL), and 1770 to 1813 (ERIV…ERFI). Disordered stretches follow at residues 1865–1896 (PTEQ…SYTY) and 1912–1955 (MTSS…TFSE). Positions 1878 to 1896 (RTSSTIKSSEGTTRESYTY) are enriched in polar residues. A compositionally biased stretch (basic residues) spans 1938–1948 (RKSRPATRKQQ).

The protein localises to the cytoplasm. It localises to the cytoskeleton. The protein resides in the microtubule organizing center. It is found in the centrosome. Its subcellular location is the chromosome. The protein localises to the centromere. It localises to the kinetochore. The protein resides in the spindle. Functionally, may play a role in the organization of the spindle apparatus and its interaction with the centromeres. This chain is 227 kDa spindle- and centromere-associated protein (PUMA1), found in Parascaris univalens (Nematode worm).